Reading from the N-terminus, the 316-residue chain is protein SLOW GREEN 1, chloroplastic (316 aa).

The N-terminal 39 residues, 1–39, are a transit peptide targeting the chloroplast; the sequence is MISSLSASSSLVSSFVAVKATPVTGPLIPRRDLLSIRIR. TPR repeat units follow at residues 118-151, 152-185, 226-259, and 261-293; these read VETL…QPEE, TEWK…NPLS, RDVR…DPKD, and RPYF…SPKK.

As to expression, ubiquitous. Preferentially expressed in newly formed green tissues.

The protein localises to the plastid. It is found in the chloroplast. In terms of biological role, required for the early stage of chloroplast development. May be involved in chloroplast protein biosynthesis and/or degradation. The polypeptide is protein SLOW GREEN 1, chloroplastic (Arabidopsis thaliana (Mouse-ear cress)).